Here is a 161-residue protein sequence, read N- to C-terminus: Allophycocyanin beta chain (161 aa).

At N71 the chain carries N4-methylasparagine. (2R,3E)-phycocyanobilin is bound at residue C81.

It belongs to the phycobiliprotein family. In terms of assembly, heterodimer of an alpha and a beta chain. Post-translationally, contains one covalently linked phycocyanobilin chromophore.

Its subcellular location is the cellular thylakoid membrane. Functionally, light-harvesting photosynthetic bile pigment-protein from the phycobiliprotein complex. Allophycocyanin has a maximum absorption at approximately 650 nanometers. The chain is Allophycocyanin beta chain (apcB) from Synechocystis sp. (strain ATCC 27184 / PCC 6803 / Kazusa).